Consider the following 66-residue polypeptide: MPQLDTSTWLTMILSMFLVLFIIFQLKISKHNFYHNPELMTTKTPKQNTPWETKWTKIYLPLSLPL.

A helical membrane pass occupies residues 8–24 (TWLTMILSMFLVLFIIF). An N6-acetyllysine; alternate modification is found at lysine 54. N6-succinyllysine; alternate is present on lysine 54. The residue at position 57 (lysine 57) is an N6-acetyllysine.

Belongs to the ATPase protein 8 family. Component of the ATP synthase complex composed at least of ATP5F1A/subunit alpha, ATP5F1B/subunit beta, ATP5MC1/subunit c (homooctomer), MT-ATP6/subunit a, MT-ATP8/subunit 8, ATP5ME/subunit e, ATP5MF/subunit f, ATP5MG/subunit g, ATP5MK/subunit k, ATP5MJ/subunit j, ATP5F1C/subunit gamma, ATP5F1D/subunit delta, ATP5F1E/subunit epsilon, ATP5PF/subunit F6, ATP5PB/subunit b, ATP5PD/subunit d, ATP5PO/subunit OSCP. ATP synthase complex consists of a soluble F(1) head domain (subunits alpha(3) and beta(3)) - the catalytic core - and a membrane F(0) domain - the membrane proton channel (subunits c, a, 8, e, f, g, k and j). These two domains are linked by a central stalk (subunits gamma, delta, and epsilon) rotating inside the F1 region and a stationary peripheral stalk (subunits F6, b, d, and OSCP). Interacts with PRICKLE3.

Its subcellular location is the mitochondrion membrane. Subunit 8, of the mitochondrial membrane ATP synthase complex (F(1)F(0) ATP synthase or Complex V) that produces ATP from ADP in the presence of a proton gradient across the membrane which is generated by electron transport complexes of the respiratory chain. ATP synthase complex consist of a soluble F(1) head domain - the catalytic core - and a membrane F(1) domain - the membrane proton channel. These two domains are linked by a central stalk rotating inside the F(1) region and a stationary peripheral stalk. During catalysis, ATP synthesis in the catalytic domain of F(1) is coupled via a rotary mechanism of the central stalk subunits to proton translocation. In vivo, can only synthesize ATP although its ATP hydrolase activity can be activated artificially in vitro. Part of the complex F(0) domain. The chain is ATP synthase F(0) complex subunit 8 from Ovis aries (Sheep).